The sequence spans 275 residues: Coagulation factor IX (275 aa).

Y23 is subject to Sulfotyrosine. An N-linked (GlcNAc...) asparagine glycan is attached at N25. T27 bears the Phosphothreonine mark. The N-linked (GlcNAc...) asparagine glycan is linked to N35. T47 carries an O-linked (GalNAc...) threonine glycan. Positions 49 to 275 (IVGGENAKPG…YTRVSWYVNW (227 aa)) constitute a Peptidase S1 domain. C74 and C90 are oxidised to a cystine. Residue H89 is the Charge relay system of the active site. A glycan (N-linked (GlcNAc...) asparagine) is linked at N96. Ca(2+) is bound by residues E103, N105, E108, E110, and E113. An N-linked (GlcNAc...) asparagine glycan is attached at N128. The active-site Charge relay system is D137. 2 cysteine pairs are disulfide-bonded: C204/C218 and C229/C257. Residue S233 is the Charge relay system of the active site.

This sequence belongs to the peptidase S1 family. Heterodimer of a light chain and a heavy chain; disulfide-linked. Interacts (inactive and activated) with F11 (activated) in calcium-dependent manner. Interacts with SERPINC1. Activated by factor XIa, which excises the activation peptide. The propeptide can also be removed by snake venom protease. Activated by coagulation factor VIIa-tissue factor (F7-F3) complex in calcium-dependent manner.

It is found in the secreted. The catalysed reaction is Selective cleavage of Arg-|-Ile bond in factor X to form factor Xa.. Factor IX is a vitamin K-dependent plasma protein that participates in the intrinsic pathway of blood coagulation by converting factor X to its active form in the presence of Ca(2+) ions, phospholipids, and factor VIIIa. The chain is Coagulation factor IX (F9) from Oryctolagus cuniculus (Rabbit).